A 346-amino-acid polypeptide reads, in one-letter code: Cell division protein ZipA (346 aa).

Residues 1–6 (MEDLQL) lie on the Periplasmic side of the membrane. The helical transmembrane segment at 7 to 27 (VLFVLGAIAIVAVLVHGFWSI) threads the bilayer. Residues 28–346 (RRQQPKSLKD…DYLHRIRANA (319 aa)) are Cytoplasmic-facing. 2 disordered regions span residues 76–103 (ANEAHTPEAPAFNPYLKQEAKTQPQPVE) and 121–145 (QPDFSLQSPTAKEQHRGPKASRQEP).

This sequence belongs to the ZipA family. Interacts with FtsZ via their C-terminal domains.

It is found in the cell inner membrane. Its function is as follows. Essential cell division protein that stabilizes the FtsZ protofilaments by cross-linking them and that serves as a cytoplasmic membrane anchor for the Z ring. Also required for the recruitment to the septal ring of downstream cell division proteins. This Shewanella sp. (strain MR-7) protein is Cell division protein ZipA.